The following is a 137-amino-acid chain: Large ribosomal subunit protein uL16 (137 aa).

This sequence belongs to the universal ribosomal protein uL16 family. In terms of assembly, part of the 50S ribosomal subunit.

Its function is as follows. Binds 23S rRNA and is also seen to make contacts with the A and possibly P site tRNAs. The polypeptide is Large ribosomal subunit protein uL16 (Bartonella bacilliformis (strain ATCC 35685 / KC583 / Herrer 020/F12,63)).